The primary structure comprises 402 residues: MEVDKKDEREAESSEQVVNPWEVSAKDGGKIDYDKLIDKFGCQRLDESLIDRVQRLTSRQPHVFLRRSVFFAHRDFNEILDAYERGDKFYLYTGRGPSSEALHLGHLIPFMFTKYLQEAFKVPLVIQLTDDEKSIWKNLSVEESQRLARENAKDIIACGFDVTKTFIFSDFDYVGGAFYKNMVKVGKCVTLNKAMGIFGFSGEDPIAKLSFPPVQAVPSFPSSFPHLFPGKDNLRCLIPCAIDQDPYFRMTRDVAPRLGYSKPALIESTFFPALQGENGKMSASDPNSAIYVTDSAKDIKNKINRYAFSGGQDSIEKHRELGANLEVDIPVKYLSFFLEDDSELEHIKKEYGEGRMLTGEVKKRLTEVLTEIVERHRRARAAVTDEMVDAFMAVRPLPSMFE.

The short motif at 97–106 is the 'HIGH' region element; sequence PSSEALHLGH. The 'KMSKS' region signature appears at 280–284; it reads KMSAS.

It belongs to the class-I aminoacyl-tRNA synthetase family.

The protein localises to the cytoplasm. It localises to the cytosol. It catalyses the reaction tRNA(Trp) + L-tryptophan + ATP = L-tryptophyl-tRNA(Trp) + AMP + diphosphate + H(+). This is Tryptophan--tRNA ligase, cytoplasmic from Arabidopsis thaliana (Mouse-ear cress).